Here is a 235-residue protein sequence, read N- to C-terminus: Transmembrane protein 215 (235 aa).

Transmembrane regions (helical) follow at residues 12 to 32 (LVVALVSVFLVFGFMFTVSGM) and 40 to 60 (IPLLAIGPAICLPGIAAIALA). Positions 99–158 (SDLESGKGSSDELAKKAGLRGKPSLQGQGELPMASSITTPTPMEEGECQSPGQSGRREET) are disordered.

The protein localises to the membrane. This chain is Transmembrane protein 215 (TMEM215), found in Bos taurus (Bovine).